Here is a 247-residue protein sequence, read N- to C-terminus: UDP-N-acetyl-D-mannosaminuronic acid transferase (247 aa).

Belongs to the glycosyltransferase 26 family.

It carries out the reaction UDP-N-acetyl-alpha-D-mannosaminouronate + N-acetyl-alpha-D-glucosaminyl-di-trans,octa-cis-undecaprenyl diphosphate = beta-D-ManNAcA-(1-&gt;4)-alpha-D-GlcNAc-di-trans,octa-cis-undecaprenyl diphosphate + UDP + H(+). The protein operates within bacterial outer membrane biogenesis; enterobacterial common antigen biosynthesis. In terms of biological role, catalyzes the synthesis of Und-PP-GlcNAc-ManNAcA (Lipid II), the second lipid-linked intermediate involved in enterobacterial common antigen (ECA) synthesis. This chain is UDP-N-acetyl-D-mannosaminuronic acid transferase, found in Enterobacter sp. (strain 638).